Reading from the N-terminus, the 463-residue chain is Phosphomannomutase/phosphoglucomutase (463 aa).

Tyr-17 is a binding site for alpha-D-glucose 1-phosphate. Position 17 (Tyr-17) interacts with alpha-D-mannose 1-phosphate. The active-site Non-phosphorylated intermediate is Ser-108. Mg(2+) is bound by residues Ser-108, Asp-242, Asp-244, and Asp-246. Ser-108 bears the Phosphoserine mark. Alpha-D-glucose 1-phosphate-binding positions include Lys-285, His-308, 325 to 329, and 421 to 425; these read EMSGH and RASNT. Residues His-308, 325 to 329, and 421 to 425 contribute to the alpha-D-mannose 1-phosphate site; these read EMSGH and RASNT.

It belongs to the phosphohexose mutase family. As to quaternary structure, monomer. Requires Mg(2+) as cofactor.

The catalysed reaction is alpha-D-mannose 1-phosphate = D-mannose 6-phosphate. It carries out the reaction alpha-D-glucose 1-phosphate = alpha-D-glucose 6-phosphate. It participates in nucleotide-sugar biosynthesis; GDP-alpha-D-mannose biosynthesis; alpha-D-mannose 1-phosphate from D-fructose 6-phosphate: step 2/2. The protein operates within bacterial outer membrane biogenesis; lipopolysaccharide biosynthesis. In terms of biological role, highly reversible phosphoryltransferase. The phosphomannomutase activity produces a precursor for alginate polymerization, the alginate layer causes a mucoid phenotype and provides a protective barrier against host immune defenses and antibiotics. Also involved in core lipopolysaccaride (LPS) biosynthesis due to its phosphoglucomutase activity. Essential for rhamnolipid production, an exoproduct correlated with pathogenicity. Required for biofilm production. The reaction proceeds via 2 processive phosphoryl transferase reactions; first from enzyme-phospho-Ser-108 to the substrate (generating a bisphosphorylated substrate intermediate and a dephosphorylated enzyme), a 180 degree rotation of the intermediate (probably aided by movement of domain 4), and subsequent transfer of phosphate back to the enzyme. This chain is Phosphomannomutase/phosphoglucomutase (algC), found in Pseudomonas aeruginosa (strain UCBPP-PA14).